Consider the following 716-residue polypeptide: Polyribonucleotide nucleotidyltransferase (716 aa).

2 residues coordinate Mg(2+): Asp-493 and Asp-499. A KH domain is found at 560-619 (PRMITIKINPEKIRDVIGKGGSVIRALTEETGTTIDISDDGVVTIASTSSEGMAEAKKRI). Residues 629–697 (GQVYEGTVLK…EKGRVRLSAK (69 aa)) enclose the S1 motif domain.

Belongs to the polyribonucleotide nucleotidyltransferase family. Mg(2+) is required as a cofactor.

It is found in the cytoplasm. It catalyses the reaction RNA(n+1) + phosphate = RNA(n) + a ribonucleoside 5'-diphosphate. Functionally, involved in mRNA degradation. Catalyzes the phosphorolysis of single-stranded polyribonucleotides processively in the 3'- to 5'-direction. This is Polyribonucleotide nucleotidyltransferase from Paraburkholderia xenovorans (strain LB400).